The chain runs to 504 residues: DnaJ homolog subfamily C member 3 (504 aa).

An N-terminal signal peptide occupies residues 1 to 31 (MVAPGSVRSRLGAVFPFLLVLVDLQYEGAEC). 9 TPR repeats span residues 37–70 (VEKHLELGKKLLAAGQLADALSQFHAAVDGDPDN), 72–104 (IAYYRRATVFLAMGKSKAALPDLTRVIELKMDF), 105–138 (TAARLQRGHLLLKQGRLAEAEDDFKKVLKSNPSE), 154–187 (MQRLRAQALDAFDSADYTAAITFLDEILEVCVWD), 188–221 (AELRELRAECFIKEGEPRKAISDLKAASKLKNDN), 222–255 (TEAFYKISILYYQLGDHELSLSEVRECLKLDQDH), 268–301 (LNKLIGSAEELIRDGRYTDATSKYESVMKAEPSV), 306–339 (VRSKERICHCFSKDEKPVEAIKICSEVLQLEPDN), and 340–373 (VNALKDRAEAYLIEEMYDEAIQDYEAAQEQNEND). A disulfide bridge connects residues Cys248 and Cys258. Residue Ser274 is modified to Phosphoserine. A disulfide bond links Cys313 and Cys329. A flexible linker region spans residues 375-393 (QIREGLEKAQRLLKQSQKR). The 69-residue stretch at 394 to 462 (DYYKILGVKR…EMRRKFDDGE (69 aa)) folds into the J domain. Positions 451–481 (DPEMRRKFDDGEDPLDAETQQGGGSNPFHRS) are disordered. Ser475 carries the post-translational modification Phosphoserine.

In terms of assembly, interacts with EIF2AK2 and EIF2AK3. Forms a trimeric complex with DNAJB1 and HSPA8. Interacts with THAP12.

The protein resides in the endoplasmic reticulum. Functionally, involved in the unfolded protein response (UPR) during ER stress. Co-chaperone of HSPA8/HSC70, it stimulates its ATPase activity. May inhibit both the autophosphorylation of EIF2AK2/PKR and the ability of EIF2AK2 to catalyze phosphorylation of the EIF2A. May inhibit EIF2AK3/PERK activity. This chain is DnaJ homolog subfamily C member 3 (Dnajc3), found in Rattus norvegicus (Rat).